A 303-amino-acid chain; its full sequence is Glycine--tRNA ligase alpha subunit (303 aa).

Belongs to the class-II aminoacyl-tRNA synthetase family. In terms of assembly, tetramer of two alpha and two beta subunits.

It is found in the cytoplasm. The catalysed reaction is tRNA(Gly) + glycine + ATP = glycyl-tRNA(Gly) + AMP + diphosphate. In Stenotrophomonas maltophilia (strain K279a), this protein is Glycine--tRNA ligase alpha subunit.